The chain runs to 592 residues: Bifunctional enzyme BirA/CoaX (592 aa).

The biotin--protein ligase stretch occupies residues 1–329 (MTVLKLSHWR…ISLRSDDRPV (329 aa)). One can recognise a BPL/LPL catalytic domain in the interval 83–259 (QTALKHECAS…ELDAVLLQYA (177 aa)). Positions 336–592 (DSERFLLLDG…AAEGREYEHI (257 aa)) are type III pantothenate kinase. ATP is bound at residue 344 to 351 (DGGNSRLK). Substrate contacts are provided by residues Tyr426 and 433 to 436 (GSDR). Asp435 (proton acceptor) is an active-site residue. ATP is bound at residue Thr458. Thr508 contacts substrate.

In the N-terminal section; belongs to the biotin--protein ligase family. This sequence in the C-terminal section; belongs to the type III pantothenate kinase family. The cofactor is NH4(+). K(+) is required as a cofactor.

It is found in the cytoplasm. The enzyme catalyses biotin + L-lysyl-[protein] + ATP = N(6)-biotinyl-L-lysyl-[protein] + AMP + diphosphate + H(+). The catalysed reaction is (R)-pantothenate + ATP = (R)-4'-phosphopantothenate + ADP + H(+). It participates in cofactor biosynthesis; coenzyme A biosynthesis; CoA from (R)-pantothenate: step 1/5. Its function is as follows. Activates biotin to form biotinyl-5'-adenylate and transfers the biotin moiety to biotin-accepting proteins. Functionally, catalyzes the phosphorylation of pantothenate (Pan), the first step in CoA biosynthesis. This is Bifunctional enzyme BirA/CoaX (birA/coaX) from Neisseria meningitidis serogroup B (strain ATCC BAA-335 / MC58).